A 452-amino-acid polypeptide reads, in one-letter code: Pup--protein ligase (452 aa).

Glu-9 is a binding site for Mg(2+). Arg-53 is a binding site for ATP. Mg(2+) is bound at residue Tyr-55. The Proton acceptor role is filled by Asp-57. Glu-63 is a Mg(2+) binding site. ATP-binding residues include Thr-66 and Trp-419.

Belongs to the Pup ligase/Pup deamidase family. Pup-conjugating enzyme subfamily.

The catalysed reaction is ATP + [prokaryotic ubiquitin-like protein]-L-glutamate + [protein]-L-lysine = ADP + phosphate + N(6)-([prokaryotic ubiquitin-like protein]-gamma-L-glutamyl)-[protein]-L-lysine.. The protein operates within protein degradation; proteasomal Pup-dependent pathway. It functions in the pathway protein modification; protein pupylation. In terms of biological role, catalyzes the covalent attachment of the prokaryotic ubiquitin-like protein modifier Pup to the proteasomal substrate proteins, thereby targeting them for proteasomal degradation. This tagging system is termed pupylation. The ligation reaction involves the side-chain carboxylate of the C-terminal glutamate of Pup and the side-chain amino group of a substrate lysine. The chain is Pup--protein ligase from Mycobacterium ulcerans (strain Agy99).